Reading from the N-terminus, the 115-residue chain is Large ribosomal subunit protein bL19 (115 aa).

It belongs to the bacterial ribosomal protein bL19 family.

In terms of biological role, this protein is located at the 30S-50S ribosomal subunit interface and may play a role in the structure and function of the aminoacyl-tRNA binding site. This chain is Large ribosomal subunit protein bL19, found in Salmonella choleraesuis (strain SC-B67).